We begin with the raw amino-acid sequence, 435 residues long: MQSGGDFSNGFHGDHHRELELEDKQGPSLSSFGRAKKRSHAGARDPRGGLANVLRVSDQLGEHKSLETSESSPPPCTDFDVAYFHSYAHVGIHEEMIKDRARTETYREAIMQHQSLIEGKVVVDVGCGTGILSIFCAQAGAKRVYAVDASDIAVQAKEVVKANGLSDKVIVLHGRVEDVEIDEEVDVIISEWMGYMLLYESMLGSVITARDRWLKPGGLILPSHATLYMAPISHPDRYSHSIDFWRNVYGIDMSAMMQLAKQCAFEEPSVESISGENVLTWPEVVKHIDCKTIKIQELDSVTARYKFNSMMRAPMHGFAFWFDVEFSGPASSPAKNTSETSIASGSSSISPSGEVNQKKRTNPSDALVLSTSPESPPTHWQQTIVYFYDPIDVEQDQVIEGSVTLSQSKENKRFMNIHLEYSSAGRSFVKESVMR.

A disordered region spans residues 1 to 48; that stretch reads MQSGGDFSNGFHGDHHRELELEDKQGPSLSSFGRAKKRSHAGARDPRG. Positions 12 to 25 are enriched in basic and acidic residues; that stretch reads HGDHHRELELEDKQ. Residues 80-418 enclose the SAM-dependent MTase PRMT-type domain; the sequence is DVAYFHSYAH…KENKRFMNIH (339 aa). 5 residues coordinate S-adenosyl-L-methionine: H93, R102, G126, D148, and E177. Residues E191 and E200 contribute to the active site. The interval 333–377 is disordered; it reads PAKNTSETSIASGSSSISPSGEVNQKKRTNPSDALVLSTSPESPP. Over residues 337-354 the composition is skewed to low complexity; sequence TSETSIASGSSSISPSGE.

It belongs to the class I-like SAM-binding methyltransferase superfamily. Protein arginine N-methyltransferase family. PRMT6 subfamily.

In terms of biological role, arginine methyltransferase that can both catalyze the formation of omega-N monomethylarginine (MMA) and asymmetrical dimethylarginine (aDMA). This is Probable protein arginine N-methyltransferase 6 (PRMT6) from Arabidopsis thaliana (Mouse-ear cress).